The primary structure comprises 111 residues: Nascent polypeptide-associated complex protein (111 aa).

The NAC-A/B domain maps to 3–72 (GMNPRQMKKL…EEVREVLEIS (70 aa)).

It belongs to the NAC-alpha family. Homodimer. Interacts with the ribosome. Binds ribosomal RNA.

Its function is as follows. Contacts the emerging nascent chain on the ribosome. In Thermococcus kodakarensis (strain ATCC BAA-918 / JCM 12380 / KOD1) (Pyrococcus kodakaraensis (strain KOD1)), this protein is Nascent polypeptide-associated complex protein.